Consider the following 385-residue polypeptide: Branched-chain-amino-acid aminotransferase, cytosolic (385 aa).

Lys221 carries the N6-(pyridoxal phosphate)lysine modification.

Belongs to the class-IV pyridoxal-phosphate-dependent aminotransferase family. In terms of assembly, homodimer. Pyridoxal 5'-phosphate serves as cofactor. As to expression, expressed in muscles.

It localises to the cytoplasm. It catalyses the reaction L-leucine + 2-oxoglutarate = 4-methyl-2-oxopentanoate + L-glutamate. The catalysed reaction is L-isoleucine + 2-oxoglutarate = (S)-3-methyl-2-oxopentanoate + L-glutamate. The enzyme catalyses L-valine + 2-oxoglutarate = 3-methyl-2-oxobutanoate + L-glutamate. Catalyzes the first reaction in the catabolism of the essential branched chain amino acids leucine, isoleucine, and valine. The polypeptide is Branched-chain-amino-acid aminotransferase, cytosolic (BCAT1) (Ovis aries (Sheep)).